The following is a 35-amino-acid chain: Surfactant protein C (35 aa).

S-palmitoyl cysteine attachment occurs at residues C5 and C6.

It is found in the secreted. It localises to the extracellular space. Its subcellular location is the surface film. Its function is as follows. Pulmonary surfactant associated proteins promote alveolar stability by lowering the surface tension at the air-liquid interface in the peripheral air spaces. The chain is Surfactant protein C (SFTPC) from Sus scrofa (Pig).